We begin with the raw amino-acid sequence, 492 residues long: T-box transcription factor TBX5-A (492 aa).

The segment at 1 to 43 (MADSEDTFRLQNSPSDSEPKDLQNEGKSDKQNAAVSKSPSSQT) is disordered. Positions 17–30 (SEPKDLQNEGKSDK) are enriched in basic and acidic residues. The segment covering 31 to 43 (QNAAVSKSPSSQT) has biased composition (polar residues). The T-box DNA-binding region spans 62–237 (LWTKFHEVGT…NNPFAKGFRG (176 aa)). A disordered region spans residues 331–352 (AGEHPYKKPYVESSSSEDDHYY).

In terms of assembly, monomer. Homodimer (via the T-box); binds DNA as homodimer. Expressed in the dorsal optic cup of developing eye, pectoral fin buds and heart. At 31 hpf, when the pectoral fin buds have begun bulging outwards, restricted expression is detected throughout the mesenchyme of the early fin buds and these high levels of expression continue until later stages.

It localises to the nucleus. The protein resides in the cytoplasm. Its function is as follows. Required for pectoral fin formation. Together with tbx5b, involved in eye and heart development. Required for the looping stage of heart development. May bind to the core DNA motif of promoters. The protein is T-box transcription factor TBX5-A (tbx5a) of Danio rerio (Zebrafish).